The primary structure comprises 306 residues: Oligopeptide transport system permease protein OppB (306 aa).

Topologically, residues 1–12 (MLKFILRRCLEA) are cytoplasmic. A helical transmembrane segment spans residues 13–30 (IPTLFILITISFFMMRLA). Topologically, residues 31-101 (PGSPFTGERA…ASFPVSAKLG (71 aa)) are periplasmic. Positions 94–293 (FPVSAKLGAA…ALTILFNAIV (200 aa)) constitute an ABC transmembrane type-1 domain. A helical membrane pass occupies residues 102 to 121 (AAAFLLAVIIGVSAGVIAAL). Residues 122–133 (KQNTRWDYTVMG) are Cytoplasmic-facing. A helical membrane pass occupies residues 134–156 (FAMTGVVIPSFVVAPLLVMVFAI). Topologically, residues 157-165 (TLQWLPGGG) are periplasmic. A helical membrane pass occupies residues 166–188 (WNGGALKFMILPMVALSLAYIAS). Residues 189–227 (IARITRGSMIEVLHSNFIRTARAKGLPMRRIIFRHALKP) lie on the Cytoplasmic side of the membrane. A helical transmembrane segment spans residues 228–250 (ALLPVLSYMGPAFVGIITGSMVI). At 251 to 277 (ETIYGLPGIGQLFVNGALNRDYSLVLS) the chain is on the periplasmic side. A helical transmembrane segment spans residues 278–300 (LTILVGALTILFNAIVDVLYAVI). Topologically, residues 301 to 306 (DPKIRY) are cytoplasmic.

This sequence belongs to the binding-protein-dependent transport system permease family. OppBC subfamily. In terms of assembly, the complex is composed of two ATP-binding proteins (OppD and OppF), two transmembrane proteins (OppB and OppC) and a solute-binding protein (OppA).

It is found in the cell inner membrane. Part of the ABC transporter complex OppABCDF involved in the uptake of oligopeptides, including the cell wall murein tripeptide L-alanyl-gamma-D-glutamyl-meso-diaminopimelate. Responsible for the translocation of the substrate across the membrane. Plays an important nutritional role and is involved in the recycling of cell wall peptides. The chain is Oligopeptide transport system permease protein OppB from Salmonella typhimurium (strain LT2 / SGSC1412 / ATCC 700720).